A 356-amino-acid polypeptide reads, in one-letter code: Tyrosine recombinase XerS (356 aa).

The 106-residue stretch at Ile16 to Thr121 folds into the Core-binding (CB) domain. The 186-residue stretch at Gly169 to Asp354 folds into the Tyr recombinase domain. Active-site residues include Arg210, Lys234, His306, Arg309, and His332. Tyr341 (O-(3'-phospho-DNA)-tyrosine intermediate) is an active-site residue.

It belongs to the 'phage' integrase family. XerS subfamily.

It localises to the cytoplasm. With respect to regulation, ftsK is required for recombination. Functionally, site-specific tyrosine recombinase, which acts by catalyzing the cutting and rejoining of the recombining DNA molecules. Essential to convert dimers of the bacterial chromosome into monomers to permit their segregation at cell division. The polypeptide is Tyrosine recombinase XerS (Lactococcus lactis subsp. lactis (strain IL1403) (Streptococcus lactis)).